The primary structure comprises 92 residues: Large ribosomal subunit protein bL27 (92 aa).

A propeptide spanning residues 1–9 (MLVMNLQYF) is cleaved from the precursor.

Belongs to the bacterial ribosomal protein bL27 family. The N-terminus is cleaved by ribosomal processing cysteine protease Prp.

The protein is Large ribosomal subunit protein bL27 of Heliobacterium modesticaldum (strain ATCC 51547 / Ice1).